A 128-amino-acid polypeptide reads, in one-letter code: Fluoride-specific ion channel FluC (128 aa).

4 consecutive transmembrane segments (helical) span residues 4–24 (LLLA…RYLI), 39–59 (GTLI…EFSM), 71–91 (FLTT…YETI), and 99–119 (ITLG…FVVI). Positions 78 and 81 each coordinate Na(+).

It belongs to the fluoride channel Fluc/FEX (TC 1.A.43) family.

The protein localises to the cell membrane. It catalyses the reaction fluoride(in) = fluoride(out). Na(+) is not transported, but it plays an essential structural role and its presence is essential for fluoride channel function. In terms of biological role, fluoride-specific ion channel. Important for reducing fluoride concentration in the cell, thus reducing its toxicity. The protein is Fluoride-specific ion channel FluC of Clostridium perfringens (strain ATCC 13124 / DSM 756 / JCM 1290 / NCIMB 6125 / NCTC 8237 / Type A).